A 75-amino-acid chain; its full sequence is MASEVLVKPQMRGLLARRLRIHMVGAFLVSLGVAALYKFGVAEPRKKAYADFYKNYSAEKDFEEMKKAGLFRSIK.

Residues Met-1 to Gly-13 lie on the Mitochondrial matrix side of the membrane. Residues Leu-14–Lys-54 form a helical membrane-spanning segment. The Mitochondrial intermembrane portion of the chain corresponds to Asn-55 to Lys-75.

Belongs to the cytochrome c oxidase subunit 6c family. Component of the cytochrome c oxidase (complex IV, CIV), a multisubunit enzyme composed of 14 subunits. The complex is composed of a catalytic core of 3 subunits MT-CO1, MT-CO2 and MT-CO3, encoded in the mitochondrial DNA, and 11 supernumerary subunits COX4I, COX5A, COX5B, COX6A, COX6B, COX6C, COX7A, COX7B, COX7C, COX8 and NDUFA4, which are encoded in the nuclear genome. The complex exists as a monomer or a dimer and forms supercomplexes (SCs) in the inner mitochondrial membrane with NADH-ubiquinone oxidoreductase (complex I, CI) and ubiquinol-cytochrome c oxidoreductase (cytochrome b-c1 complex, complex III, CIII), resulting in different assemblies (supercomplex SCI(1)III(2)IV(1) and megacomplex MCI(2)III(2)IV(2)).

The protein localises to the mitochondrion inner membrane. It functions in the pathway energy metabolism; oxidative phosphorylation. Functionally, component of the cytochrome c oxidase, the last enzyme in the mitochondrial electron transport chain which drives oxidative phosphorylation. The respiratory chain contains 3 multisubunit complexes succinate dehydrogenase (complex II, CII), ubiquinol-cytochrome c oxidoreductase (cytochrome b-c1 complex, complex III, CIII) and cytochrome c oxidase (complex IV, CIV), that cooperate to transfer electrons derived from NADH and succinate to molecular oxygen, creating an electrochemical gradient over the inner membrane that drives transmembrane transport and the ATP synthase. Cytochrome c oxidase is the component of the respiratory chain that catalyzes the reduction of oxygen to water. Electrons originating from reduced cytochrome c in the intermembrane space (IMS) are transferred via the dinuclear copper A center (CU(A)) of subunit 2 and heme A of subunit 1 to the active site in subunit 1, a binuclear center (BNC) formed by heme A3 and copper B (CU(B)). The BNC reduces molecular oxygen to 2 water molecules using 4 electrons from cytochrome c in the IMS and 4 protons from the mitochondrial matrix. The protein is Cytochrome c oxidase subunit 6C (COX6C) of Plecturocebus donacophilus (Bolivian gray titi monkey).